An 858-amino-acid polypeptide reads, in one-letter code: Heat shock protein 105 kDa (858 aa).

S2 is subject to N-acetylserine. Residue K471 is modified to N6-acetyllysine. Disordered regions lie at residues K500–A585 and V801–D858. Acidic residues predominate over residues E504–M515. A phosphoserine mark is found at S509 and S510. A compositionally biased stretch (polar residues) spans Q533–G549. Residue S558 is modified to Phosphoserine. T562 carries the post-translational modification Phosphothreonine. Composition is skewed to basic and acidic residues over residues E564 to A585 and P806 to R815. Residue S810 is modified to Phosphoserine. T816 carries the post-translational modification Phosphothreonine.

Belongs to the heat shock protein 70 family. Interacts with HSPA8/HSC70. Interacts with HSPA1A (via NBD) and HSPA1B (via NBD). In terms of processing, phosphorylation on Ser-509 may be important for regulation of the HSPA8/HSC70 chaperone activity. Expressed in neurons in the cerebrum and Purkinje cells in the cerebellum (at protein level). Expressed in testis and no expression or only low-level expression in liver, spleen, lung, and kidney (at protein level). Highly expressed in the brain and moderately expressed in lung, heart, thymus, spleen, liver, and small intestine.

It localises to the cytoplasm. Its subcellular location is the nucleus. Acts as a nucleotide-exchange factor (NEF) for chaperone proteins HSPA1A and HSPA1B, promoting the release of ADP from HSPA1A/B thereby triggering client/substrate protein release. Prevents the aggregation of denatured proteins in cells under severe stress, on which the ATP levels decrease markedly. Inhibits HSPA8/HSC70 ATPase and chaperone activities. The polypeptide is Heat shock protein 105 kDa (Hsph1) (Mus musculus (Mouse)).